The sequence spans 124 residues: Small ribosomal subunit protein uS12 (124 aa).

Asp89 is subject to 3-methylthioaspartic acid.

The protein belongs to the universal ribosomal protein uS12 family. Part of the 30S ribosomal subunit. Contacts proteins S8 and S17. May interact with IF1 in the 30S initiation complex.

Its function is as follows. With S4 and S5 plays an important role in translational accuracy. Interacts with and stabilizes bases of the 16S rRNA that are involved in tRNA selection in the A site and with the mRNA backbone. Located at the interface of the 30S and 50S subunits, it traverses the body of the 30S subunit contacting proteins on the other side and probably holding the rRNA structure together. The combined cluster of proteins S8, S12 and S17 appears to hold together the shoulder and platform of the 30S subunit. This is Small ribosomal subunit protein uS12 from Shewanella frigidimarina (strain NCIMB 400).